Consider the following 124-residue polypeptide: UPF0102 protein Meso_4010 (124 aa).

This sequence belongs to the UPF0102 family.

The chain is UPF0102 protein Meso_4010 from Chelativorans sp. (strain BNC1).